We begin with the raw amino-acid sequence, 481 residues long: Aspartyl/glutamyl-tRNA(Asn/Gln) amidotransferase subunit B (481 aa).

The protein belongs to the GatB/GatE family. GatB subfamily. In terms of assembly, heterotrimer of A, B and C subunits.

It carries out the reaction L-glutamyl-tRNA(Gln) + L-glutamine + ATP + H2O = L-glutaminyl-tRNA(Gln) + L-glutamate + ADP + phosphate + H(+). It catalyses the reaction L-aspartyl-tRNA(Asn) + L-glutamine + ATP + H2O = L-asparaginyl-tRNA(Asn) + L-glutamate + ADP + phosphate + 2 H(+). Allows the formation of correctly charged Asn-tRNA(Asn) or Gln-tRNA(Gln) through the transamidation of misacylated Asp-tRNA(Asn) or Glu-tRNA(Gln) in organisms which lack either or both of asparaginyl-tRNA or glutaminyl-tRNA synthetases. The reaction takes place in the presence of glutamine and ATP through an activated phospho-Asp-tRNA(Asn) or phospho-Glu-tRNA(Gln). In Pseudomonas aeruginosa (strain LESB58), this protein is Aspartyl/glutamyl-tRNA(Asn/Gln) amidotransferase subunit B.